The following is a 170-amino-acid chain: Ubiquitin-conjugating enzyme E2 G1 (170 aa).

Met-1 carries the post-translational modification N-acetylmethionine. Thr-2 carries the N-acetylthreonine; in Ubiquitin-conjugating enzyme E2 G1, N-terminally processed modification. The UBC core domain maps to 5-166 (QSALLLRRQL…VARCVRKSQE (162 aa)). Catalysis depends on Cys-90, which acts as the Glycyl thioester intermediate.

Belongs to the ubiquitin-conjugating enzyme family. In terms of processing, autoubiquitinated.

It catalyses the reaction S-ubiquitinyl-[E1 ubiquitin-activating enzyme]-L-cysteine + [E2 ubiquitin-conjugating enzyme]-L-cysteine = [E1 ubiquitin-activating enzyme]-L-cysteine + S-ubiquitinyl-[E2 ubiquitin-conjugating enzyme]-L-cysteine.. Its pathway is protein modification; protein ubiquitination. In terms of biological role, accepts ubiquitin from the E1 complex and catalyzes its covalent attachment to other proteins. In vitro catalyzes 'Lys-48'-, as well as 'Lys-63'-linked polyubiquitination. May be involved in degradation of muscle-specific proteins. Mediates polyubiquitination of CYP3A4. The chain is Ubiquitin-conjugating enzyme E2 G1 (UBE2G1) from Macaca fascicularis (Crab-eating macaque).